Consider the following 722-residue polypeptide: Polyribonucleotide nucleotidyltransferase (722 aa).

Aspartate 486 and aspartate 492 together coordinate Mg(2+). The 60-residue stretch at 553–612 (PRITTIQIRPEFIKNVIGPGGKVIKDIIARTGAAINIEDSGRVDIASANGEAVKAAIAMI) folds into the KH domain. The 69-residue stretch at 622 to 690 (GKIYTGTVRK…KTGKIRLSRK (69 aa)) folds into the S1 motif domain. The segment at 696 to 722 (RAAQQGAAAGEAAAQPAPAPTQPDAKA) is disordered.

It belongs to the polyribonucleotide nucleotidyltransferase family. It depends on Mg(2+) as a cofactor.

The protein resides in the cytoplasm. The enzyme catalyses RNA(n+1) + phosphate = RNA(n) + a ribonucleoside 5'-diphosphate. Functionally, involved in mRNA degradation. Catalyzes the phosphorolysis of single-stranded polyribonucleotides processively in the 3'- to 5'-direction. The protein is Polyribonucleotide nucleotidyltransferase of Myxococcus xanthus (strain DK1622).